The chain runs to 387 residues: MQVFWFLPTHGDSRYLGTAEGARQVDQAYLQQVAVAADTLGYEGVLIPTGRSCEDPWIVAASLIPATRRLRFLVAVRPGLVAPTLAARMAATFDRLSQGRLLVNLVTGGDPGELAGDGLFLDHAQRYEASAEFIRIWRETLAASHEGAALDYTGRHLSVKGARVLFPPVQRPHPPVYFGGSSEAAHALAAEQVDTYLTWGEPPAAVAEKIADVRRRAARHGRTVRFGIRLHVIVRETEDAAWQAADTLISKLDDDTVARAQAAFRKMDSAGQQRMAALHANGIRRSRAELEISPNLWAGVGLVRGGAGTALVGDPHTVAARMREYADLGIDTFVLSGYPHLEEAYRFAELVFPLLPRAVRDTLPGSVLNGPFGEVIATGIVPRVAAS.

Belongs to the SsuD family.

The enzyme catalyses an alkanesulfonate + FMNH2 + O2 = an aldehyde + FMN + sulfite + H2O + 2 H(+). Catalyzes the desulfonation of aliphatic sulfonates. In Ralstonia nicotianae (strain ATCC BAA-1114 / GMI1000) (Ralstonia solanacearum), this protein is Alkanesulfonate monooxygenase.